We begin with the raw amino-acid sequence, 617 residues long: Vacuolar protein sorting-associated protein 33B (617 aa).

A2 bears the N-acetylalanine mark.

It belongs to the STXBP/unc-18/SEC1 family. In terms of assembly, interacts with RAB11A and VIPAS39. Associates with adaptor protein complex 3 (AP-3), clathrin:AP-3 and clathrin:HGS complexes. In terms of processing, phosphorylated on tyrosine residues. As to expression, ubiquitous.

The protein localises to the late endosome membrane. It localises to the lysosome membrane. The protein resides in the early endosome. Its subcellular location is the cytoplasmic vesicle. It is found in the clathrin-coated vesicle. The protein localises to the recycling endosome. In terms of biological role, may play a role in vesicle-mediated protein trafficking to lysosomal compartments and in membrane docking/fusion reactions of late endosomes/lysosomes. Mediates phagolysosomal fusion in macrophages. Proposed to be involved in endosomal maturation implicating VIPAS39. In epithelial cells, the VPS33B:VIPAS39 complex may play a role in the apical recycling pathway and in the maintenance of the apical-basolateral polarity. Seems to be involved in the sorting of specific cargos from the trans-Golgi network to alpha-granule-destined multivesicular bodies (MVBs) promoting MVBs maturation in megakaryocytes. This Rattus norvegicus (Rat) protein is Vacuolar protein sorting-associated protein 33B (Vps33b).